The following is an 894-amino-acid chain: Protein NLP9 (894 aa).

Residues glutamine 517–glycine 603 form the RWP-RK domain. The stretch at arginine 578–glutamine 598 forms a coiled coil. Residues asparagine 732–leucine 763 form a disordered region. Positions serine 747–leucine 763 are enriched in low complexity. In terms of domain architecture, PB1 spans threonine 792–isoleucine 875.

The protein resides in the nucleus. Its function is as follows. Probable transcription factor. This is Protein NLP9 (NLP9) from Arabidopsis thaliana (Mouse-ear cress).